The following is a 97-amino-acid chain: Integration host factor subunit alpha (97 aa).

Residues 50–71 (FGNFTLRDKPQRPGRNPKTGEE) are disordered.

The protein belongs to the bacterial histone-like protein family. In terms of assembly, heterodimer of an alpha and a beta chain.

This protein is one of the two subunits of integration host factor, a specific DNA-binding protein that functions in genetic recombination as well as in transcriptional and translational control. This chain is Integration host factor subunit alpha, found in Legionella pneumophila (strain Paris).